An 867-amino-acid chain; its full sequence is Elongation factor 2 (867 aa).

Positions 17-368 (HNIRNLSVVA…MIVLHLPSPV (352 aa)) constitute a tr-type G domain. 26–33 (AHVDHGKS) is a binding site for GTP. Phosphothreonine is present on residues Thr-57 and Thr-59. Residues 176–179 (NKLD) and 231–233 (SGL) contribute to the GTP site. His-723 is modified (diphthamide).

The protein belongs to the TRAFAC class translation factor GTPase superfamily. Classic translation factor GTPase family. EF-G/EF-2 subfamily. In terms of processing, phosphorylation by EF-2 kinase completely inactivates EF-2.

Its subcellular location is the cytoplasm. The catalysed reaction is GTP + H2O = GDP + phosphate + H(+). Catalyzes the GTP-dependent ribosomal translocation step during translation elongation. During this step, the ribosome changes from the pre-translocational (PRE) to the post-translocational (POST) state as the newly formed A-site-bound peptidyl-tRNA and P-site-bound deacylated tRNA move to the P and E sites, respectively. Catalyzes the coordinated movement of the two tRNA molecules, the mRNA and conformational changes in the ribosome. The polypeptide is Elongation factor 2 (Blastocystis hominis).